Reading from the N-terminus, the 194-residue chain is PRELI domain containing protein 3B (194 aa).

Residues 1–172 (MKIWTSEHVF…VIHKLNAEIE (172 aa)) enclose the PRELI/MSF1 domain. A phosphoserine mark is found at Ser46 and Ser51.

The protein belongs to the slowmo family.

This Sus scrofa (Pig) protein is PRELI domain containing protein 3B (PRELID3B).